Reading from the N-terminus, the 104-residue chain is Cytochrome c-551 (104 aa).

A signal peptide spans 1 to 22; that stretch reads MKPYALLSLLATGTLLAQGAWA. The heme c site is built by cysteine 34, cysteine 37, histidine 38, and methionine 83.

Post-translationally, binds 1 heme c group covalently per subunit.

It is found in the periplasm. Electron donor for cytochrome cd1 in nitrite and nitrate respiration. This Pseudomonas aeruginosa (strain ATCC 15692 / DSM 22644 / CIP 104116 / JCM 14847 / LMG 12228 / 1C / PRS 101 / PAO1) protein is Cytochrome c-551 (nirM).